The following is a 241-amino-acid chain: NAD(P)H-hydrate epimerase (241 aa).

The YjeF N-terminal domain maps to 11 to 221 (AASLDKDLME…SIVEKYGLNC (211 aa)). 65–69 (NNGGD) lines the (6S)-NADPHX pocket. K(+) is bound by residues asparagine 66 and aspartate 127. (6S)-NADPHX contacts are provided by residues 131-137 (GFSFGGP) and aspartate 160. Serine 163 is a K(+) binding site.

It belongs to the NnrE/AIBP family. It depends on K(+) as a cofactor.

Its subcellular location is the cytoplasm. The protein resides in the mitochondrion. The enzyme catalyses (6R)-NADHX = (6S)-NADHX. It carries out the reaction (6R)-NADPHX = (6S)-NADPHX. Catalyzes the epimerization of the S- and R-forms of NAD(P)HX, a damaged form of NAD(P)H that is a result of enzymatic or heat-dependent hydration. This is a prerequisite for the S-specific NAD(P)H-hydrate dehydratase to allow the repair of both epimers of NAD(P)HX. This chain is NAD(P)H-hydrate epimerase, found in Aspergillus fumigatus (strain ATCC MYA-4609 / CBS 101355 / FGSC A1100 / Af293) (Neosartorya fumigata).